A 181-amino-acid chain; its full sequence is Ribosome maturation factor RimM (181 aa).

The region spanning 97 to 170 (AGEFWLPDLM…RIEVVAIPGL (74 aa)) is the PRC barrel domain.

The protein belongs to the RimM family. As to quaternary structure, binds ribosomal protein uS19.

Its subcellular location is the cytoplasm. Functionally, an accessory protein needed during the final step in the assembly of 30S ribosomal subunit, possibly for assembly of the head region. Essential for efficient processing of 16S rRNA. May be needed both before and after RbfA during the maturation of 16S rRNA. It has affinity for free ribosomal 30S subunits but not for 70S ribosomes. The polypeptide is Ribosome maturation factor RimM (Gloeobacter violaceus (strain ATCC 29082 / PCC 7421)).